The primary structure comprises 152 residues: Large ribosomal subunit protein bL9 (152 aa).

This sequence belongs to the bacterial ribosomal protein bL9 family.

Its function is as follows. Binds to the 23S rRNA. The chain is Large ribosomal subunit protein bL9 from Corynebacterium urealyticum (strain ATCC 43042 / DSM 7109).